The primary structure comprises 436 residues: Trigger factor (436 aa).

The PPIase FKBP-type domain maps to 163 to 248 (GDTVVIDFDG…IHEVKEKQLP (86 aa)).

Belongs to the FKBP-type PPIase family. Tig subfamily.

It is found in the cytoplasm. The enzyme catalyses [protein]-peptidylproline (omega=180) = [protein]-peptidylproline (omega=0). Its function is as follows. Involved in protein export. Acts as a chaperone by maintaining the newly synthesized protein in an open conformation. Functions as a peptidyl-prolyl cis-trans isomerase. The sequence is that of Trigger factor from Levilactobacillus brevis (strain ATCC 367 / BCRC 12310 / CIP 105137 / JCM 1170 / LMG 11437 / NCIMB 947 / NCTC 947) (Lactobacillus brevis).